We begin with the raw amino-acid sequence, 468 residues long: E3 ubiquitin-protein ligase TRIM11 (468 aa).

The RING-type zinc-finger motif lies at 16-57 (CAICLDYFTDPVMTDCGHNFCRECIRRCWGQPEGPYACPECR). A Phosphoserine modification is found at Ser-85. Residues 87-128 (VPQGVCAAHREPLAAFCGDELRLLCAACERSGEHWAHRVRPL) form a B box-type zinc finger. Zn(2+) contacts are provided by Cys-92, His-95, Cys-114, and His-120. A coiled-coil region spans residues 128 to 233 (LQDAAEDLKS…QLAELITELE (106 aa)). In terms of domain architecture, B30.2/SPRY spans 268 to 461 (EMRTVCRVPG…MTICRLKGGP (194 aa)). Residue Lys-458 forms a Glycyl lysine isopeptide (Lys-Gly) (interchain with G-Cter in ubiquitin) linkage.

This sequence belongs to the TRIM/RBCC family. As to quaternary structure, binds cytoplasmic tail of integrin alpha-1. Interacts with the HN peptide. Interacts with PHOX2B. Interacts (when autoubiquitinated) with SQSTM1/p62; promoting AIM2 recruitment to autophagosomes. Interacts with AIM2; promoting its autophagy-dependent degradation. In terms of processing, autoubiquitinated upon DNA stimulation; autoubiquitination promotes interaction with SQSTM1/p62 and recruitment of AIM2 to autophagosomes.

The protein localises to the cytoplasm. The protein resides in the nucleus. The enzyme catalyses S-ubiquitinyl-[E2 ubiquitin-conjugating enzyme]-L-cysteine + [acceptor protein]-L-lysine = [E2 ubiquitin-conjugating enzyme]-L-cysteine + N(6)-ubiquitinyl-[acceptor protein]-L-lysine.. The protein operates within protein modification; protein ubiquitination. In terms of biological role, E3 ubiquitin-protein ligase that promotes the degradation of insoluble ubiquitinated proteins, including insoluble PAX6, poly-Gln repeat expanded HTT and poly-Ala repeat expanded ARX. Mediates PAX6 ubiquitination leading to proteasomal degradation, thereby modulating cortical neurogenesis. May also inhibit PAX6 transcriptional activity, possibly in part by preventing the binding of PAX6 to its consensus sequences. May contribute to the regulation of the intracellular level of HN (humanin) or HN-containing proteins through the proteasomal degradation pathway. Mediates MED15 ubiquitination leading to proteasomal degradation. May contribute to the innate restriction of retroviruses. Upon overexpression, reduces HIV-1 and murine leukemia virus infectivity, by suppressing viral gene expression. Antiviral activity depends on a functional E3 ubiquitin-protein ligase domain. May regulate TRIM5 turnover via the proteasome pathway, thus counteracting the TRIM5-mediated cross-species restriction of retroviral infection at early stages of the retroviral life cycle. Acts as an inhibitor of the AIM2 inflammasome by promoting autophagy-dependent degradation of AIM2. Mechanistically, undergoes autoubiquitination upon DNA stimulation, promoting interaction with AIM2 and SQSTM1/p62, leading to AIM2 recruitment to autophagosomes. This chain is E3 ubiquitin-protein ligase TRIM11 (TRIM11), found in Bos taurus (Bovine).